The primary structure comprises 209 residues: Small ribosomal subunit protein uS3 (209 aa).

The 70-residue stretch at 38–107 folds into the KH type-2 domain; sequence IRKVIKNKYA…RFIVNVEEIK (70 aa).

Belongs to the universal ribosomal protein uS3 family. Part of the 30S ribosomal subunit. Forms a tight complex with proteins S10 and S14.

Functionally, binds the lower part of the 30S subunit head. Binds mRNA in the 70S ribosome, positioning it for translation. The sequence is that of Small ribosomal subunit protein uS3 from Thermosipho africanus (strain TCF52B).